Here is a 126-residue protein sequence, read N- to C-terminus: Ribosome-binding factor A (126 aa).

Belongs to the RbfA family. Monomer. Binds 30S ribosomal subunits, but not 50S ribosomal subunits or 70S ribosomes.

It localises to the cytoplasm. In terms of biological role, one of several proteins that assist in the late maturation steps of the functional core of the 30S ribosomal subunit. Associates with free 30S ribosomal subunits (but not with 30S subunits that are part of 70S ribosomes or polysomes). Required for efficient processing of 16S rRNA. May interact with the 5'-terminal helix region of 16S rRNA. This is Ribosome-binding factor A from Treponema pallidum (strain Nichols).